The chain runs to 140 residues: Oocyte zinc finger protein XlCOF15 (140 aa).

C2H2-type zinc fingers lie at residues 6 to 28 (FTCK…QKIH), 34 to 56 (FTCT…QKVH), 62 to 84 (FICT…HVIH), 90 to 112 (FTCA…RAAH), and 118 to 140 (FICT…LKSH).

This sequence belongs to the krueppel C2H2-type zinc-finger protein family.

It localises to the nucleus. In terms of biological role, may be involved in transcriptional regulation. This chain is Oocyte zinc finger protein XlCOF15, found in Xenopus laevis (African clawed frog).